A 158-amino-acid chain; its full sequence is NAD(P)H-quinone oxidoreductase subunit N (158 aa).

This sequence belongs to the complex I NdhN subunit family. NDH-1 can be composed of about 15 different subunits; different subcomplexes with different compositions have been identified which probably have different functions.

Its subcellular location is the cellular thylakoid membrane. It catalyses the reaction a plastoquinone + NADH + (n+1) H(+)(in) = a plastoquinol + NAD(+) + n H(+)(out). The enzyme catalyses a plastoquinone + NADPH + (n+1) H(+)(in) = a plastoquinol + NADP(+) + n H(+)(out). In terms of biological role, NDH-1 shuttles electrons from an unknown electron donor, via FMN and iron-sulfur (Fe-S) centers, to quinones in the respiratory and/or the photosynthetic chain. The immediate electron acceptor for the enzyme in this species is believed to be plastoquinone. Couples the redox reaction to proton translocation, and thus conserves the redox energy in a proton gradient. Cyanobacterial NDH-1 also plays a role in inorganic carbon-concentration. In Crocosphaera subtropica (strain ATCC 51142 / BH68) (Cyanothece sp. (strain ATCC 51142)), this protein is NAD(P)H-quinone oxidoreductase subunit N.